The following is a 270-amino-acid chain: Pyrroline-5-carboxylate reductase (270 aa).

This sequence belongs to the pyrroline-5-carboxylate reductase family.

The protein resides in the cytoplasm. It carries out the reaction L-proline + NADP(+) = (S)-1-pyrroline-5-carboxylate + NADPH + 2 H(+). The catalysed reaction is L-proline + NAD(+) = (S)-1-pyrroline-5-carboxylate + NADH + 2 H(+). The protein operates within amino-acid biosynthesis; L-proline biosynthesis; L-proline from L-glutamate 5-semialdehyde: step 1/1. Its function is as follows. Catalyzes the reduction of 1-pyrroline-5-carboxylate (PCA) to L-proline. The protein is Pyrroline-5-carboxylate reductase of Methanosarcina acetivorans (strain ATCC 35395 / DSM 2834 / JCM 12185 / C2A).